Consider the following 201-residue polypeptide: Recombination protein RecR (201 aa).

A C4-type zinc finger spans residues C57–C72. Residues T80–P175 enclose the Toprim domain.

Belongs to the RecR family.

May play a role in DNA repair. It seems to be involved in an RecBC-independent recombinational process of DNA repair. It may act with RecF and RecO. The protein is Recombination protein RecR of Coxiella burnetii (strain RSA 493 / Nine Mile phase I).